Consider the following 120-residue polypeptide: Cell division protein FtsL (120 aa).

Residues 1-36 (MSNLAVKYKQQAQEEVQIQTPPQQMVQPKAKAKITR) lie on the Cytoplasmic side of the membrane. A helical membrane pass occupies residues 37–57 (IEKLLYVAFIGFLLYACVAFI). The Extracellular portion of the chain corresponds to 58–120 (GNKAGLYQVN…INANNVKGLK (63 aa)).

The protein belongs to the FtsL family.

It localises to the cell membrane. Essential cell division protein. This Bacillus anthracis protein is Cell division protein FtsL.